Reading from the N-terminus, the 566-residue chain is MNPTTPRGGQLWSRCGGCASLLYRKRLRRNLDVCPECGAHSRLDAPARLAQLVDPGSFTALADRAPEVDPIGFVDVLPYPHRLTAARSGTGLAEAVVCGTATVAGSRCVIAVMDFRFLGGSLGCAVGELITQAAERALADRVPLVVVTASGGARMQEGVLSLMQMATVSQAVAALRESGVPSVSVLTDPTYGGVAASFATNTDVVIAESGARMGFAGPRVIRQVTGRELPDGFQTAEFLLRHGQVDLVVPRHALRGCLATLLAAASGGREPVGAGHESECPPVDGSSTQERGADKRDAWETVRLARHPGRPTTLDYLETAFDSFVELHGDRLGADCPAVVGGLAELAGRPVLVVGHQKGHTTGDLMSRNFGMASPAGHRKALRLARLAARWGLPVVTLVDTPGADPGVGAEEQGQAAAIAENILTLTMLPTPVVAVITGEGGSGGALALAVADRVLMLEHAVYSVISPEGCAAILWPDRSAAPQAARALRLTSADLCRLGVVDAVVPEPAPAAHHDPPAAMQAVREAVLAHLVPLLEVPTATLVRRRRRRFRRFGAAGLGARAGAR.

The segment at 1 to 243 (MNPTTPRGGQ…QTAEFLLRHG (243 aa)) is acetyl-coenzyme A carboxylase carboxyl transferase subunit beta. The CoA carboxyltransferase N-terminal domain maps to 11-280 (LWSRCGGCAS…PVGAGHESEC (270 aa)). A carboxyltransferase region spans residues 11–534 (LWSRCGGCAS…REAVLAHLVP (524 aa)). Zn(2+)-binding residues include Cys15, Cys18, Cys34, and Cys37. The tract at residues 244 to 557 (QVDLVVPRHA…RRRFRRFGAA (314 aa)) is acetyl-coenzyme A carboxylase carboxyl transferase subunit alpha. Residues 268–295 (GREPVGAGHESECPPVDGSSTQERGADK) form a disordered region. The 253-residue stretch at 282 to 534 (PVDGSSTQER…REAVLAHLVP (253 aa)) folds into the CoA carboxyltransferase C-terminal domain.

The protein in the N-terminal section; belongs to the AccD/PCCB family. It in the C-terminal section; belongs to the AccA family. Acetyl-CoA carboxylase is a heterotetramer composed of biotin carboxyl carrier protein (AccB), biotin carboxylase (AccC) and two subunits of ACCase subunit beta/alpha. Zn(2+) is required as a cofactor.

The protein resides in the cytoplasm. The enzyme catalyses N(6)-carboxybiotinyl-L-lysyl-[protein] + acetyl-CoA = N(6)-biotinyl-L-lysyl-[protein] + malonyl-CoA. It participates in lipid metabolism; malonyl-CoA biosynthesis; malonyl-CoA from acetyl-CoA: step 1/1. In terms of biological role, component of the acetyl coenzyme A carboxylase (ACC) complex. Biotin carboxylase (BC) catalyzes the carboxylation of biotin on its carrier protein (BCCP) and then the CO(2) group is transferred by the transcarboxylase to acetyl-CoA to form malonyl-CoA. In Salinispora tropica (strain ATCC BAA-916 / DSM 44818 / JCM 13857 / NBRC 105044 / CNB-440), this protein is Acetyl-coenzyme A carboxylase carboxyl transferase subunits beta/alpha (accD).